The sequence spans 163 residues: Type-1 angiotensin II receptor-associated protein-like (163 aa).

Topologically, residues methionine 1 to leucine 28 are extracellular. Residues proline 29–glutamine 49 form a helical membrane-spanning segment. Residues arginine 50–alanine 55 lie on the Cytoplasmic side of the membrane. The chain crosses the membrane as a helical span at residues isoleucine 56–leucine 76. The Extracellular portion of the chain corresponds to tyrosine 77–arginine 95. The helical transmembrane segment at phenylalanine 96–tyrosine 116 threads the bilayer. Residues histidine 117 to tyrosine 163 are Cytoplasmic-facing.

The protein resides in the membrane. Its function is as follows. Appears to be a negative regulator of angiotensin II type I receptor-mediated signaling. The chain is Type-1 angiotensin II receptor-associated protein-like (agtrap) from Xenopus tropicalis (Western clawed frog).